Here is a 643-residue protein sequence, read N- to C-terminus: Phosphomethylpyrimidine synthase (643 aa).

Substrate is bound by residues asparagine 248, methionine 277, tyrosine 306, histidine 342, 362–364, 403–406, and glutamate 442; these read SRG and DGLR. A Zn(2+)-binding site is contributed by histidine 446. Tyrosine 469 provides a ligand contact to substrate. Zn(2+) is bound at residue histidine 510. Positions 590, 593, and 598 each coordinate [4Fe-4S] cluster.

Belongs to the ThiC family. As to quaternary structure, homodimer. It depends on [4Fe-4S] cluster as a cofactor.

The enzyme catalyses 5-amino-1-(5-phospho-beta-D-ribosyl)imidazole + S-adenosyl-L-methionine = 4-amino-2-methyl-5-(phosphooxymethyl)pyrimidine + CO + 5'-deoxyadenosine + formate + L-methionine + 3 H(+). It functions in the pathway cofactor biosynthesis; thiamine diphosphate biosynthesis. In terms of biological role, catalyzes the synthesis of the hydroxymethylpyrimidine phosphate (HMP-P) moiety of thiamine from aminoimidazole ribotide (AIR) in a radical S-adenosyl-L-methionine (SAM)-dependent reaction. The chain is Phosphomethylpyrimidine synthase from Burkholderia ambifaria (strain MC40-6).